A 405-amino-acid chain; its full sequence is Cytochrome P450 109 (405 aa).

A heme-binding site is contributed by Cys-351.

This sequence belongs to the cytochrome P450 family. Requires heme as cofactor.

In terms of biological role, cytochromes P450 are a group of heme-thiolate monooxygenases. They oxidize a variety of structurally unrelated compounds, including steroids, fatty acids, and xenobiotics. The polypeptide is Cytochrome P450 109 (cyp109) (Bacillus spizizenii (strain ATCC 23059 / NRRL B-14472 / W23) (Bacillus subtilis subsp. spizizenii)).